The primary structure comprises 401 residues: Acetate kinase (401 aa).

Residue N7 participates in Mg(2+) binding. Residue K14 participates in ATP binding. A substrate-binding site is contributed by R90. D147 functions as the Proton donor/acceptor in the catalytic mechanism. Residues 207–211 (HLGNG), 282–284 (DFR), and 330–334 (GVGEN) contribute to the ATP site. E383 is a Mg(2+) binding site.

It belongs to the acetokinase family. As to quaternary structure, homodimer. The cofactor is Mg(2+). Mn(2+) is required as a cofactor.

The protein localises to the cytoplasm. The enzyme catalyses acetate + ATP = acetyl phosphate + ADP. The protein operates within metabolic intermediate biosynthesis; acetyl-CoA biosynthesis; acetyl-CoA from acetate: step 1/2. Its function is as follows. Catalyzes the formation of acetyl phosphate from acetate and ATP. Can also catalyze the reverse reaction. This Clostridium novyi (strain NT) protein is Acetate kinase.